The chain runs to 521 residues: Cytochrome P450 1A1 (521 aa).

Position 229 (F229) interacts with substrate. C463 provides a ligand contact to heme.

Belongs to the cytochrome P450 family. The cofactor is heme.

Its subcellular location is the endoplasmic reticulum membrane. It localises to the microsome membrane. The catalysed reaction is an organic molecule + reduced [NADPH--hemoprotein reductase] + O2 = an alcohol + oxidized [NADPH--hemoprotein reductase] + H2O + H(+). Cytochromes P450 are a group of heme-thiolate monooxygenases. They oxidize a variety of structurally unrelated compounds, including steroids, fatty acids, and xenobiotics. The protein is Cytochrome P450 1A1 (cyp1a1) of Oryzias latipes (Japanese rice fish).